The chain runs to 120 residues: Thiosulfate sulfurtransferase 16, chloroplastic (120 aa).

One can recognise a Rhodanese domain in the interval 20–120 (LLAGHRYLDV…WAKNGLPTKA (101 aa)). Cys80 serves as the catalytic Cysteine persulfide intermediate. Arg85 serves as a coordination point for substrate.

Monomer.

Its subcellular location is the plastid. It localises to the chloroplast. The enzyme catalyses thiosulfate + hydrogen cyanide = thiocyanate + sulfite + 2 H(+). In terms of biological role, thought to act during the early stages of leaf senescence. Catalyzes the transfer of a sulfur ion from a donor to cyanide or to other thiol compounds. Substrate preference is thiosulfate &gt; 3-mercaptopyruvate. The protein is Thiosulfate sulfurtransferase 16, chloroplastic (STR16) of Arabidopsis thaliana (Mouse-ear cress).